A 489-amino-acid polypeptide reads, in one-letter code: Probable transporter MCH1 (489 aa).

12 helical membrane-spanning segments follow: residues 34 to 54, 68 to 88, 94 to 114, 124 to 144, 156 to 175, 196 to 216, 262 to 282, 302 to 324, 335 to 355, 359 to 379, 403 to 423, and 463 to 483; these read ISLISCLCAGSVLLFALFTPV, IIGSFTSIGMYLPLPVLGYLA, VLLSVISVLFFSPGYTLAATV, LAISFGLIGCATSALYFTALL, LTISAPVTCYGLSSLIGSRV, FSFLYFFLGLFDWVSASVVSI, ISTYVLLFSLLLSIGPSEMYI, VAIHAVFSTLSRLSLGALSDFLV, LLSIIVLGFFTQIFIATSTFV, YYIISALSGFSYGGLFTLYPT, IGSTTFGMVFGLVYDSACGVF, and SLIIINHLHYIKYIYLLILRI.

It belongs to the major facilitator superfamily.

It localises to the vacuole membrane. Its function is as follows. Probable transporter. This is Probable transporter MCH1 (MCH1) from Wickerhamomyces anomalus (Yeast).